The chain runs to 1197 residues: Disease resistance-like protein CSA1 (1197 aa).

The 164-residue stretch at 15-178 folds into the TIR domain; that stretch reads PQDQVFINFR…IIIRKVKEIL (164 aa). The active site involves glutamate 89. One can recognise an NB-ARC domain in the interval 210–480; sequence RIKQLEEKLR…ACFRSQDENY (271 aa). LRR repeat units follow at residues 614 to 636, 638 to 659, 694 to 716, 728 to 749, 750 to 774, 776 to 796, 797 to 819, 820 to 843, 845 to 862, and 863 to 889; these read LNEVRYLHWLKFPLKEVPQDFNP, NLVDLKLPYSEIERVWEDNKDA, TALKEMHVDMENMKFLVFLNLRG, LISLKTLILSGCSKFKTFQVIS, DKLEALYLDGTAIKELPCDIGRLQR, VMLNMKGCKKLKRLPDSLGQL, KALEELILSGCSKLNEFPETWGN, MSRLEILLLDETAIKDMPKILSVR, LCLNKNEKISRLPDLLNK, and FSQLQWLHLKYCKNLTHVPQLPPNLQY.

It carries out the reaction NAD(+) + H2O = ADP-D-ribose + nicotinamide + H(+). Its function is as follows. TIR-NB-LRR receptor-like protein that functions in photomorphogenic development. May function downstream of phytochrome B (phyB) signaling. This chain is Disease resistance-like protein CSA1, found in Arabidopsis thaliana (Mouse-ear cress).